A 352-amino-acid chain; its full sequence is Small ribosomal subunit biogenesis GTPase RsgA (352 aa).

Over residues 1-11 (MTKRKLSKGQQ) the composition is skewed to basic residues. A disordered region spans residues 1–35 (MTKRKLSKGQQRRVQENHKKRLQSKEKKNHVELDD). Residues 13-33 (RVQENHKKRLQSKEKKNHVEL) show a composition bias toward basic and acidic residues. One can recognise a CP-type G domain in the interval 114–276 (YYDGIKPIAA…VIDSPGVREF (163 aa)). Residues 162–165 (NKVD) and 216–224 (GQSGVGKSS) contribute to the GTP site. Residues Cys300, Cys305, His307, and Cys313 each coordinate Zn(2+).

Belongs to the TRAFAC class YlqF/YawG GTPase family. RsgA subfamily. As to quaternary structure, monomer. Associates with 30S ribosomal subunit, binds 16S rRNA. Requires Zn(2+) as cofactor.

The protein resides in the cytoplasm. In terms of biological role, one of several proteins that assist in the late maturation steps of the functional core of the 30S ribosomal subunit. Helps release RbfA from mature subunits. May play a role in the assembly of ribosomal proteins into the subunit. Circularly permuted GTPase that catalyzes slow GTP hydrolysis, GTPase activity is stimulated by the 30S ribosomal subunit. The chain is Small ribosomal subunit biogenesis GTPase RsgA from Proteus mirabilis (strain HI4320).